The following is a 296-amino-acid chain: Cytidine deaminase (296 aa).

2 CMP/dCMP-type deaminase domains span residues glutamate 47 to serine 167 and aspartate 186 to glutamate 296. A substrate-binding site is contributed by asparagine 88 to glutamate 90. Histidine 101 provides a ligand contact to Zn(2+). Residue glutamate 103 is the Proton donor of the active site. Zn(2+)-binding residues include cysteine 128 and cysteine 131.

It belongs to the cytidine and deoxycytidylate deaminase family. As to quaternary structure, homodimer. Requires Zn(2+) as cofactor.

The enzyme catalyses cytidine + H2O + H(+) = uridine + NH4(+). It catalyses the reaction 2'-deoxycytidine + H2O + H(+) = 2'-deoxyuridine + NH4(+). Functionally, this enzyme scavenges exogenous and endogenous cytidine and 2'-deoxycytidine for UMP synthesis. This chain is Cytidine deaminase, found in Shewanella halifaxensis (strain HAW-EB4).